The chain runs to 131 residues: Small ribosomal subunit protein eS24 (131 aa).

Methionine 1 bears the N-acetylmethionine mark. Phosphothreonine is present on threonine 9. Lysine 37 is covalently cross-linked (Glycyl lysine isopeptide (Lys-Gly) (interchain with G-Cter in SUMO2)). Residues 90 to 100 (RLARHGLYEKK) show a composition bias toward basic and acidic residues. A disordered region spans residues 90–131 (RLARHGLYEKKKTSRKQRKERKNRMKKVRGTAKANVGAGKKK). Over residues 101-119 (KTSRKQRKERKNRMKKVRG) the composition is skewed to basic residues.

Belongs to the eukaryotic ribosomal protein eS24 family. As to quaternary structure, component of the small ribosomal subunit. Part of the small subunit (SSU) processome, composed of more than 70 proteins and the RNA chaperone small nucleolar RNA (snoRNA) U3.

It localises to the cytoplasm. The protein localises to the nucleus. The protein resides in the nucleolus. Functionally, component of the small ribosomal subunit. The ribosome is a large ribonucleoprotein complex responsible for the synthesis of proteins in the cell. Required for processing of pre-rRNA and maturation of 40S ribosomal subunits. Part of the small subunit (SSU) processome, first precursor of the small eukaryotic ribosomal subunit. During the assembly of the SSU processome in the nucleolus, many ribosome biogenesis factors, an RNA chaperone and ribosomal proteins associate with the nascent pre-rRNA and work in concert to generate RNA folding, modifications, rearrangements and cleavage as well as targeted degradation of pre-ribosomal RNA by the RNA exosome. The protein is Small ribosomal subunit protein eS24 (RPS24) of Macaca fascicularis (Crab-eating macaque).